The chain runs to 217 residues: Small ribosomal subunit protein uS3 (217 aa).

Residues I38–K106 enclose the KH type-2 domain.

It belongs to the universal ribosomal protein uS3 family. In terms of assembly, part of the 30S ribosomal subunit. Forms a tight complex with proteins S10 and S14.

Its function is as follows. Binds the lower part of the 30S subunit head. Binds mRNA in the 70S ribosome, positioning it for translation. In Staphylococcus aureus (strain COL), this protein is Small ribosomal subunit protein uS3 (rpsC).